Here is a 545-residue protein sequence, read N- to C-terminus: Carboxypeptidase Y homolog A (545 aa).

A signal peptide spans Met1 to Gly17. Residues Pro18–Lys123 constitute a propeptide that is removed on maturation. 5 cysteine pairs are disulfide-bonded: Cys177–Cys416, Cys311–Cys325, Cys335–Cys358, Cys342–Cys351, and Cys380–Cys386. An N-linked (GlcNAc...) asparagine glycan is attached at Asn208. Ser264 is a catalytic residue. Residue Asp455 is part of the active site. Asn485, Asn491, and Asn506 each carry an N-linked (GlcNAc...) asparagine glycan. His517 is an active-site residue.

It belongs to the peptidase S10 family.

Its subcellular location is the vacuole. The catalysed reaction is Release of a C-terminal amino acid with broad specificity.. In terms of biological role, vacuolar carboxypeptidase involved in degradation of small peptides. Digests preferentially peptides containing an aliphatic or hydrophobic residue in P1' position, as well as methionine, leucine or phenylalanine in P1 position of ester substrate. This chain is Carboxypeptidase Y homolog A (CPYA), found in Ajellomyces dermatitidis (strain ER-3 / ATCC MYA-2586) (Blastomyces dermatitidis).